Here is a 280-residue protein sequence, read N- to C-terminus: 3-methyl-2-oxobutanoate hydroxymethyltransferase (280 aa).

Mg(2+) contacts are provided by D61 and D100. Residues 61 to 62, D100, and K130 each bind 3-methyl-2-oxobutanoate; that span reads DS. E132 lines the Mg(2+) pocket. Catalysis depends on E198, which acts as the Proton acceptor.

It belongs to the PanB family. Homodecamer; pentamer of dimers. Mg(2+) serves as cofactor.

It localises to the cytoplasm. It catalyses the reaction 3-methyl-2-oxobutanoate + (6R)-5,10-methylene-5,6,7,8-tetrahydrofolate + H2O = 2-dehydropantoate + (6S)-5,6,7,8-tetrahydrofolate. The protein operates within cofactor biosynthesis; (R)-pantothenate biosynthesis; (R)-pantoate from 3-methyl-2-oxobutanoate: step 1/2. Its function is as follows. Catalyzes the reversible reaction in which hydroxymethyl group from 5,10-methylenetetrahydrofolate is transferred onto alpha-ketoisovalerate to form ketopantoate. This chain is 3-methyl-2-oxobutanoate hydroxymethyltransferase, found in Mycolicibacterium vanbaalenii (strain DSM 7251 / JCM 13017 / BCRC 16820 / KCTC 9966 / NRRL B-24157 / PYR-1) (Mycobacterium vanbaalenii).